The chain runs to 160 residues: Ribosomal RNA large subunit methyltransferase H (160 aa).

S-adenosyl-L-methionine-binding residues include leucine 76 and glycine 108.

Belongs to the RNA methyltransferase RlmH family. As to quaternary structure, homodimer.

It localises to the cytoplasm. The catalysed reaction is pseudouridine(1915) in 23S rRNA + S-adenosyl-L-methionine = N(3)-methylpseudouridine(1915) in 23S rRNA + S-adenosyl-L-homocysteine + H(+). Specifically methylates the pseudouridine at position 1915 (m3Psi1915) in 23S rRNA. The sequence is that of Ribosomal RNA large subunit methyltransferase H from Bradyrhizobium sp. (strain BTAi1 / ATCC BAA-1182).